We begin with the raw amino-acid sequence, 572 residues long: Proline--tRNA ligase (572 aa).

This sequence belongs to the class-II aminoacyl-tRNA synthetase family. ProS type 1 subfamily. In terms of assembly, homodimer.

The protein localises to the cytoplasm. The enzyme catalyses tRNA(Pro) + L-proline + ATP = L-prolyl-tRNA(Pro) + AMP + diphosphate. In terms of biological role, catalyzes the attachment of proline to tRNA(Pro) in a two-step reaction: proline is first activated by ATP to form Pro-AMP and then transferred to the acceptor end of tRNA(Pro). As ProRS can inadvertently accommodate and process non-cognate amino acids such as alanine and cysteine, to avoid such errors it has two additional distinct editing activities against alanine. One activity is designated as 'pretransfer' editing and involves the tRNA(Pro)-independent hydrolysis of activated Ala-AMP. The other activity is designated 'posttransfer' editing and involves deacylation of mischarged Ala-tRNA(Pro). The misacylated Cys-tRNA(Pro) is not edited by ProRS. This is Proline--tRNA ligase from Haemophilus influenzae (strain PittEE).